Here is a 324-residue protein sequence, read N- to C-terminus: Elongation factor P--(R)-beta-lysine ligase (324 aa).

A substrate-binding site is contributed by 75–77 (SPE). ATP is bound by residues 99–101 (RNE) and asparagine 108. Tyrosine 117 is a substrate binding site. Residue 243–244 (EL) coordinates ATP. Glutamate 250 contributes to the substrate binding site. Glycine 299 is an ATP binding site.

The protein belongs to the class-II aminoacyl-tRNA synthetase family. EpmA subfamily. In terms of assembly, homodimer.

It carries out the reaction D-beta-lysine + L-lysyl-[protein] + ATP = N(6)-((3R)-3,6-diaminohexanoyl)-L-lysyl-[protein] + AMP + diphosphate + H(+). With EpmB is involved in the beta-lysylation step of the post-translational modification of translation elongation factor P (EF-P). Catalyzes the ATP-dependent activation of (R)-beta-lysine produced by EpmB, forming a lysyl-adenylate, from which the beta-lysyl moiety is then transferred to the epsilon-amino group of a conserved specific lysine residue in EF-P. In Pseudoalteromonas translucida (strain TAC 125), this protein is Elongation factor P--(R)-beta-lysine ligase.